The primary structure comprises 359 residues: Phospho-N-acetylmuramoyl-pentapeptide-transferase (359 aa).

10 helical membrane passes run 3-23 (LILI…PALI), 55-75 (VAIL…GMAM), 80-100 (PSAS…VGFI), 117-137 (TAKT…ALQF), 156-176 (IATV…VVSA), 187-207 (LDGL…LITF), 231-251 (LALV…WNAA), 255-275 (IFMG…ISVT), 280-300 (ILAV…VVQI), and 334-354 (FWLL…GEWL).

Belongs to the glycosyltransferase 4 family. MraY subfamily. It depends on Mg(2+) as a cofactor.

Its subcellular location is the cell membrane. The enzyme catalyses UDP-N-acetyl-alpha-D-muramoyl-L-alanyl-gamma-D-glutamyl-meso-2,6-diaminopimeloyl-D-alanyl-D-alanine + di-trans,octa-cis-undecaprenyl phosphate = di-trans,octa-cis-undecaprenyl diphospho-N-acetyl-alpha-D-muramoyl-L-alanyl-D-glutamyl-meso-2,6-diaminopimeloyl-D-alanyl-D-alanine + UMP. It participates in cell wall biogenesis; peptidoglycan biosynthesis. Its function is as follows. Catalyzes the initial step of the lipid cycle reactions in the biosynthesis of the cell wall peptidoglycan: transfers peptidoglycan precursor phospho-MurNAc-pentapeptide from UDP-MurNAc-pentapeptide onto the lipid carrier undecaprenyl phosphate, yielding undecaprenyl-pyrophosphoryl-MurNAc-pentapeptide, known as lipid I. The chain is Phospho-N-acetylmuramoyl-pentapeptide-transferase from Mycolicibacterium smegmatis (strain ATCC 700084 / mc(2)155) (Mycobacterium smegmatis).